A 298-amino-acid polypeptide reads, in one-letter code: ATP synthase gamma chain (298 aa).

Belongs to the ATPase gamma chain family. As to quaternary structure, F-type ATPases have 2 components, CF(1) - the catalytic core - and CF(0) - the membrane proton channel. CF(1) has five subunits: alpha(3), beta(3), gamma(1), delta(1), epsilon(1). CF(0) has three main subunits: a, b and c.

The protein resides in the cell inner membrane. Its function is as follows. Produces ATP from ADP in the presence of a proton gradient across the membrane. The gamma chain is believed to be important in regulating ATPase activity and the flow of protons through the CF(0) complex. This Francisella tularensis subsp. holarctica (strain FTNF002-00 / FTA) protein is ATP synthase gamma chain.